Consider the following 366-residue polypeptide: Glucose 1-dehydrogenase 2 (366 aa).

Cys39 contacts Zn(2+). Ser41 is a substrate binding site. His66 and Glu67 together coordinate Zn(2+). Asn90, Glu116, Gln152, and Asp156 together coordinate substrate. Gln152 is a Zn(2+) binding site. NADP(+) contacts are provided by residues Asn212–Arg214, Phe277–Phe279, Leu305–Asn307, and Lys354. Asn307 contributes to the substrate binding site.

Belongs to the zinc-containing alcohol dehydrogenase family. Glucose 1-dehydrogenase subfamily. Zn(2+) serves as cofactor.

The catalysed reaction is D-glucose + NAD(+) = D-glucono-1,5-lactone + NADH + H(+). It catalyses the reaction D-glucose + NADP(+) = D-glucono-1,5-lactone + NADPH + H(+). Catalyzes the NAD(P)(+)-dependent oxidation of D-glucose to D-gluconate via gluconolactone. Can utilize both NAD(+) and NADP(+) as electron acceptor. Is involved in the degradation of glucose through a non-phosphorylative variant of the Entner-Doudoroff pathway. This chain is Glucose 1-dehydrogenase 2, found in Caldivirga maquilingensis (strain ATCC 700844 / DSM 13496 / JCM 10307 / IC-167).